Reading from the N-terminus, the 261-residue chain is Ribonuclease PH (261 aa).

Phosphate contacts are provided by residues Arg-88 and 126–128; that span reads GTR. Positions 242–261 are disordered; it reads PYPGVLPEPKNPEPKKKFGA. Positions 251 to 261 are enriched in basic and acidic residues; sequence KNPEPKKKFGA.

The protein belongs to the RNase PH family. Homohexameric ring arranged as a trimer of dimers.

The enzyme catalyses tRNA(n+1) + phosphate = tRNA(n) + a ribonucleoside 5'-diphosphate. In terms of biological role, phosphorolytic 3'-5' exoribonuclease that plays an important role in tRNA 3'-end maturation. Removes nucleotide residues following the 3'-CCA terminus of tRNAs; can also add nucleotides to the ends of RNA molecules by using nucleoside diphosphates as substrates, but this may not be physiologically important. Probably plays a role in initiation of 16S rRNA degradation (leading to ribosome degradation) during starvation. In Rhodococcus erythropolis (strain PR4 / NBRC 100887), this protein is Ribonuclease PH.